The sequence spans 181 residues: NAD(P)H-quinone oxidoreductase subunit I, chloroplastic (181 aa).

4Fe-4S ferredoxin-type domains lie at 55 to 84 and 95 to 124; these read GRIHFEFDKCIACEVCVRVCPINLPVVDWE and KSYSIDFGVCIFCGNCVEYCPTNCLSMTEE. [4Fe-4S] cluster-binding residues include C64, C67, C70, C74, C104, C107, C110, and C114.

Belongs to the complex I 23 kDa subunit family. In terms of assembly, NDH is composed of at least 16 different subunits, 5 of which are encoded in the nucleus. [4Fe-4S] cluster is required as a cofactor.

It is found in the plastid. Its subcellular location is the chloroplast thylakoid membrane. The enzyme catalyses a plastoquinone + NADH + (n+1) H(+)(in) = a plastoquinol + NAD(+) + n H(+)(out). The catalysed reaction is a plastoquinone + NADPH + (n+1) H(+)(in) = a plastoquinol + NADP(+) + n H(+)(out). Its function is as follows. NDH shuttles electrons from NAD(P)H:plastoquinone, via FMN and iron-sulfur (Fe-S) centers, to quinones in the photosynthetic chain and possibly in a chloroplast respiratory chain. The immediate electron acceptor for the enzyme in this species is believed to be plastoquinone. Couples the redox reaction to proton translocation, and thus conserves the redox energy in a proton gradient. This chain is NAD(P)H-quinone oxidoreductase subunit I, chloroplastic, found in Physcomitrium patens (Spreading-leaved earth moss).